The sequence spans 265 residues: MSDSIKIKAIDEVKISRYIIKQTMEDWMNFVENDVVIVGAGPAGMSAAYYLAKHGLKTLVFERRLSFGGGIGGGAMLFHKLVIESPADEVLKEMNIRLEKVEDGVYIVDSAEFMAKLAASAIDAGAKIIHGVTVDDVIFRENPLRVAGVAVEWTATQMAGLHVDPVFISAKAVVDATGHDAEVVAVASRKIPELGIVIPGERSAYSEMAEKLTVEQTGVVAPGLYVAGMSVTEVRGLPRMGPIFGSMVLSGKKVAEDIIKDLRNS.

Residues Ala-43, 62–63 (ER), Gly-70, Val-134, and 162–164 (HVD) each bind NAD(+). The Fe cation site is built by Asp-164 and His-179. Met-229 provides a ligand contact to NAD(+). Arg-239 is a glycine binding site.

It belongs to the THI4 family. As to quaternary structure, homooctamer; tetramer of dimers. It depends on Fe(2+) as a cofactor.

The enzyme catalyses hydrogen sulfide + glycine + NAD(+) = ADP-5-ethyl-4-methylthiazole-2-carboxylate + nicotinamide + 3 H2O + H(+). The protein operates within cofactor biosynthesis; thiamine diphosphate biosynthesis. Its function is as follows. Involved in the biosynthesis of the thiazole moiety of thiamine. Catalyzes the conversion of NAD and glycine to adenosine diphosphate 5-(2-hydroxyethyl)-4-methylthiazole-2-carboxylate (ADT), an adenylated thiazole intermediate, using free sulfide as a source of sulfur. The chain is Thiamine thiazole synthase from Sulfolobus acidocaldarius (strain ATCC 33909 / DSM 639 / JCM 8929 / NBRC 15157 / NCIMB 11770).